Consider the following 295-residue polypeptide: Bifunctional protein FolD (295 aa).

NADP(+) contacts are provided by residues 166-168, serine 191, and isoleucine 232; that span reads GRS.

It belongs to the tetrahydrofolate dehydrogenase/cyclohydrolase family. As to quaternary structure, homodimer.

It carries out the reaction (6R)-5,10-methylene-5,6,7,8-tetrahydrofolate + NADP(+) = (6R)-5,10-methenyltetrahydrofolate + NADPH. It catalyses the reaction (6R)-5,10-methenyltetrahydrofolate + H2O = (6R)-10-formyltetrahydrofolate + H(+). It functions in the pathway one-carbon metabolism; tetrahydrofolate interconversion. Its function is as follows. Catalyzes the oxidation of 5,10-methylenetetrahydrofolate to 5,10-methenyltetrahydrofolate and then the hydrolysis of 5,10-methenyltetrahydrofolate to 10-formyltetrahydrofolate. This chain is Bifunctional protein FolD, found in Wolbachia pipientis subsp. Culex pipiens (strain wPip).